Reading from the N-terminus, the 858-residue chain is Coiled-coil and C2 domain-containing protein 1B (858 aa).

Disordered stretches follow at residues 112 to 164, 180 to 199, 204 to 284, 329 to 352, and 470 to 533; these read VLGV…GASQ, AAAS…CERG, ESQL…ALLS, VDLS…APTA, and EKLA…SPSV. Acidic residues predominate over residues 114–143; the sequence is GVDEETEPLDGDEVADPGGSEEENGLEDTE. The span at 153-164 shows a compositional bias: low complexity; that stretch reads ASAPAAQAGASQ. Residues 166 to 212 adopt a coiled-coil conformation; sequence LHALLEERIHNYREAAASAKEAGEAAKARRCERGLKTLESQLASVRR. A compositionally biased stretch (basic and acidic residues) spans 186–199; the sequence is EAGEAAKARRCERG. Serine 209 carries the phosphoserine modification. A compositionally biased stretch (low complexity) spans 520–532; that stretch reads PRASSSKESPSPS. Position 593 is a phosphoserine (serine 593). Threonine 596 carries the post-translational modification Phosphothreonine. Positions 611–635 form a coiled coil; the sequence is RLSQKAEEVYAQLQKMLLEQQEKCL. In terms of domain architecture, C2 spans 676–815; sequence DPPTHHFELK…ENECEIREIV (140 aa).

It belongs to the CC2D1 family. In terms of assembly, interacts with CHMP4B. In terms of tissue distribution, widely distributed in brain and peripheral tissues.

The protein localises to the nucleus. Transcription factor that binds specifically to the DRE (dual repressor element) and represses HTR1A gene transcription in neuronal cells. The polypeptide is Coiled-coil and C2 domain-containing protein 1B (CC2D1B) (Homo sapiens (Human)).